The sequence spans 557 residues: D-arabinono-1,4-lactone oxidase (557 aa).

One can recognise an FAD-binding PCMH-type domain in the interval 26–209 (FFCKPQAIFQ…THVTLRTIPK (184 aa)). Position 63 is a pros-8alpha-FAD histidine (H63).

The protein belongs to the oxygen-dependent FAD-linked oxidoreductase family. FAD is required as a cofactor.

The protein localises to the mitochondrion membrane. The catalysed reaction is D-arabinono-1,4-lactone + O2 = dehydro-D-arabinono-1,4-lactone + H2O2 + H(+). Its pathway is cofactor biosynthesis; D-erythroascorbate biosynthesis; dehydro-D-arabinono-1,4-lactone from D-arabinose: step 2/2. The polypeptide is D-arabinono-1,4-lactone oxidase (ALO1) (Debaryomyces hansenii (strain ATCC 36239 / CBS 767 / BCRC 21394 / JCM 1990 / NBRC 0083 / IGC 2968) (Yeast)).